Reading from the N-terminus, the 491-residue chain is Equilibrative nucleobase transporter 1 (491 aa).

A helical membrane pass occupies residues 17 to 37 (LLECLGFAGVLFGWPSLVFVF). The N-linked (GlcNAc...) asparagine glycan is linked to Asn56. Transmembrane regions (helical) follow at residues 72 to 92 (LIFT…GYIF), 102 to 122 (LIAI…SAGS), 123 to 143 (AVLL…FLIT), 156 to 176 (STII…FLII), and 188 to 208 (ASFI…FLLM). N-linked (GlcNAc...) asparagine glycans are attached at residues Asn220 and Asn229. At Ser253 the chain carries Phosphoserine. Thr258 bears the Phosphothreonine mark. Helical transmembrane passes span 279 to 299 (FAWH…FIGT), 319 to 339 (TNAF…GLLM), 356 to 376 (STLA…SLLC), 396 to 418 (ILQV…LAFP), 427 to 447 (GLVM…FTLI), and 456 to 476 (FYVN…PFLV).

This sequence belongs to the SLC43A transporter (TC 2.A.1.44) family. As to expression, widely expressed with highest levels in the liver and lung, followed by the pancreas. Highly expressed in macrophages.

Its subcellular location is the basolateral cell membrane. The enzyme catalyses adenine(out) = adenine(in). It catalyses the reaction guanine(out) = guanine(in). It carries out the reaction hypoxanthine(out) = hypoxanthine(in). With respect to regulation, adenine transport is strongly inhibited by decynium-22. 6-mercaptopurine-transport is inhibited by 6-thioguanine, 6-methylmercaptopurine and decynium-22. Sodium-independent purine-selective nucleobase transporter which mediates the equilibrative transport of extracellular purine nucleobases such as adenine, guanine and hypoxanthine. May regulate fatty acid (FA) transport in adipocytes, acting as a positive regulator of FA efflux and as a negative regulator of FA uptake. Functionally, sodium-independent purine-selective nucleobase transporter which mediates the equilibrative transport of extracellular purine nucleobase adenine. Mediates the influx and efflux of the purine nucleobase analog drug 6-mercaptopurine across the membrane. The sequence is that of Equilibrative nucleobase transporter 1 (SLC43A3) from Homo sapiens (Human).